The primary structure comprises 427 residues: Endothelin-1 receptor (427 aa).

The N-terminal stretch at 1–20 is a signal peptide; sequence METFWLRLSFWVALVGGVIS. The Extracellular portion of the chain corresponds to 21 to 80; sequence DNPESYSTNLSIHVDSVATFHGTELSFVVTTHQPTNLALPSNGSMHNYCPQQTKITSAFK. N-linked (GlcNAc...) asparagine glycosylation is found at asparagine 29 and asparagine 62. The helical transmembrane segment at 81–102 threads the bilayer; the sequence is YINTVISCTIFIVGMVGNATLL. The Cytoplasmic portion of the chain corresponds to 103–112; sequence RIIYQNKCMR. The chain crosses the membrane as a helical span at residues 113-132; it reads NGPNALIASLALGDLIYVVI. At 133 to 159 the chain is on the extracellular side; that stretch reads DLPINVFKLLAGRWPFEQNDFGVFLCK. Residues cysteine 158 and cysteine 239 are joined by a disulfide bond. The helical transmembrane segment at 160–181 threads the bilayer; it reads LFPFLQKSSVGITVLNLCALSV. At 182-205 the chain is on the cytoplasmic side; that stretch reads DRYRAVASWSRVQGIGIPLVTAIE. The helical transmembrane segment at 206-229 threads the bilayer; that stretch reads IVSIWILSFILAIPEAIGFVMVPF. Over 230 to 256 the chain is Extracellular; it reads EYKGAQHRTCMLNATSKFMEFYQDVKD. The helical transmembrane segment at 257-278 threads the bilayer; it reads WWLFGFYFCMPLVCTAIFYTLM. Topologically, residues 279–306 are cytoplasmic; the sequence is TCEMLNRRNGSLRIALSEHLKQRREVAK. The helical transmembrane segment at 307 to 328 threads the bilayer; that stretch reads TVFCLVVIFALCWFPLHLSRIL. Residues 329 to 347 lie on the Extracellular side of the membrane; it reads KKTVYDEMDTNRCELLSFL. A helical transmembrane segment spans residues 348–372; that stretch reads LLMDYIGINLATMNSCINPIALYFV. Residues 373–427 lie on the Cytoplasmic side of the membrane; that stretch reads SKKFKNCFQSCLCCCCYQSKSLMTSVPMNGTSIQWKNHEQNNHNTERSSHKDSIN. The residue at position 425 (serine 425) is a Phosphoserine.

It belongs to the G-protein coupled receptor 1 family. Endothelin receptor subfamily. EDNRA sub-subfamily. Interacts with HDAC7 and KAT5.

The protein resides in the cell membrane. In terms of biological role, receptor for endothelin-1. Mediates its action by association with G proteins that activate a phosphatidylinositol-calcium second messenger system. The rank order of binding affinities for ET-A is: ET1 &gt; ET2 &gt;&gt; ET3. The chain is Endothelin-1 receptor from Bos taurus (Bovine).